A 179-amino-acid polypeptide reads, in one-letter code: Large ribosomal subunit protein uL10 (179 aa).

Belongs to the universal ribosomal protein uL10 family. In terms of assembly, part of the ribosomal stalk of the 50S ribosomal subunit. The N-terminus interacts with L11 and the large rRNA to form the base of the stalk. The C-terminus forms an elongated spine to which L12 dimers bind in a sequential fashion forming a multimeric L10(L12)X complex.

In terms of biological role, forms part of the ribosomal stalk, playing a central role in the interaction of the ribosome with GTP-bound translation factors. The protein is Large ribosomal subunit protein uL10 of Thermomicrobium roseum (strain ATCC 27502 / DSM 5159 / P-2).